A 334-amino-acid chain; its full sequence is MKAVNPLTENDVTPESLFNARRRTVLKMLGMSAAALSLPGAARADLLSWFKGGDRPRAASGRPLDFSQPQQFQANLPLTPEDKVTGYNNFYEFGLDKADPAAHAGTLKTADWKIEIDGEVAKPLTLSMDDIFKRFAQEQRIYRMRCVEGWSMVVPWVGFELGKLLQAAEPTSNARFVAFHTLYAPDQMPGQQDRFIGGGLDYPYVEGLRLDEAMHPLTLLTTGVYGKALPPQNGAPIRLTVPWKYGFKGIKSIVKISLVKAMPPTTWNQLAPNEYGFYANVNPHVDHPRWSQATERFIGSGGILDVQRQPTLLFNGYADQVASLYRGLDLRENF.

Positions 1–44 (MKAVNPLTENDVTPESLFNARRRTVLKMLGMSAAALSLPGAARA) form a signal peptide, tat-type signal. Mo-molybdopterin contacts are provided by residues asparagine 88, 91–92 (YE), cysteine 146, threonine 181, asparagine 233, arginine 238, and 249–251 (GIK).

This sequence belongs to the MsrP family. In terms of assembly, heterodimer of a catalytic subunit (MsrP) and a heme-binding subunit (MsrQ). Mo-molybdopterin serves as cofactor. In terms of processing, predicted to be exported by the Tat system. The position of the signal peptide cleavage has not been experimentally proven.

The protein resides in the periplasm. The enzyme catalyses L-methionyl-[protein] + a quinone + H2O = L-methionyl-(S)-S-oxide-[protein] + a quinol. It carries out the reaction L-methionyl-[protein] + a quinone + H2O = L-methionyl-(R)-S-oxide-[protein] + a quinol. Functionally, part of the MsrPQ system that repairs oxidized periplasmic proteins containing methionine sulfoxide residues (Met-O), using respiratory chain electrons. Thus protects these proteins from oxidative-stress damage caused by reactive species of oxygen and chlorine generated by the host defense mechanisms. MsrPQ is essential for the maintenance of envelope integrity under bleach stress, rescuing a wide series of structurally unrelated periplasmic proteins from methionine oxidation. The catalytic subunit MsrP is non-stereospecific, being able to reduce both (R-) and (S-) diastereoisomers of methionine sulfoxide. The sequence is that of Protein-methionine-sulfoxide reductase catalytic subunit MsrP from Erwinia tasmaniensis (strain DSM 17950 / CFBP 7177 / CIP 109463 / NCPPB 4357 / Et1/99).